The chain runs to 435 residues: Type A flavoprotein fprA (435 aa).

The segment at 48-228 (ANGTTYNAYA…PFRSFVAQVL (181 aa)) is zinc metallo-hydrolase. Fe cation is bound by residues His98, Glu100, Asp102, His167, Asp186, and His243. The Flavodoxin-like domain occupies 276–415 (LLIFYVSAYR…EGRAFGRRLA (140 aa)).

This sequence in the N-terminal section; belongs to the zinc metallo-hydrolase group 3 family. Homodimer. The cofactor is FMN. Requires Fe cation as cofactor.

Its function is as follows. Low-potential electron donor to a number of redox enzymes. This is Type A flavoprotein fprA (fprA) from Rhodobacter capsulatus (Rhodopseudomonas capsulata).